Here is a 182-residue protein sequence, read N- to C-terminus: Heat shock protein beta-2 (182 aa).

Residues 55 to 163 enclose the sHSP domain; sequence PAGEGSRAGA…DTEVNEVYIS (109 aa).

Belongs to the small heat shock protein (HSP20) family. Interacts with DMPK; may enhance its kinase activity. In terms of tissue distribution, expressed preferentially in skeletal muscle and heart but not in the lens.

It localises to the cytoplasm. Its subcellular location is the nucleus. Its function is as follows. May regulate the kinase DMPK. This is Heat shock protein beta-2 (HSPB2) from Homo sapiens (Human).